The chain runs to 227 residues: Cytochrome c oxidase subunit 2 (227 aa).

Residues 1–14 (MAYPMQLGLQDATS) are Mitochondrial intermembrane-facing. Residues 15 to 45 (PIMEELTDFHDHTLMIVFLISTLVLYIISLM) traverse the membrane as a helical segment. Residues 46–59 (LTTKLTHTNTMDAQ) lie on the Mitochondrial matrix side of the membrane. A helical membrane pass occupies residues 60-87 (EVETVWTILPAIILIMIALPSLRILYMM). Residues 88–227 (DEINDPYLTV…QFESWTSSMT (140 aa)) lie on the Mitochondrial intermembrane side of the membrane. Positions 161, 196, 198, 200, 204, and 207 each coordinate Cu cation. Mg(2+) is bound at residue E198.

The protein belongs to the cytochrome c oxidase subunit 2 family. Component of the cytochrome c oxidase (complex IV, CIV), a multisubunit enzyme composed of 14 subunits. The complex is composed of a catalytic core of 3 subunits MT-CO1, MT-CO2 and MT-CO3, encoded in the mitochondrial DNA, and 11 supernumerary subunits COX4I, COX5A, COX5B, COX6A, COX6B, COX6C, COX7A, COX7B, COX7C, COX8 and NDUFA4, which are encoded in the nuclear genome. The complex exists as a monomer or a dimer and forms supercomplexes (SCs) in the inner mitochondrial membrane with NADH-ubiquinone oxidoreductase (complex I, CI) and ubiquinol-cytochrome c oxidoreductase (cytochrome b-c1 complex, complex III, CIII), resulting in different assemblies (supercomplex SCI(1)III(2)IV(1) and megacomplex MCI(2)III(2)IV(2)). Found in a complex with TMEM177, COA6, COX18, COX20, SCO1 and SCO2. Interacts with TMEM177 in a COX20-dependent manner. Interacts with COX20. Interacts with COX16. The cofactor is Cu cation.

Its subcellular location is the mitochondrion inner membrane. The enzyme catalyses 4 Fe(II)-[cytochrome c] + O2 + 8 H(+)(in) = 4 Fe(III)-[cytochrome c] + 2 H2O + 4 H(+)(out). Component of the cytochrome c oxidase, the last enzyme in the mitochondrial electron transport chain which drives oxidative phosphorylation. The respiratory chain contains 3 multisubunit complexes succinate dehydrogenase (complex II, CII), ubiquinol-cytochrome c oxidoreductase (cytochrome b-c1 complex, complex III, CIII) and cytochrome c oxidase (complex IV, CIV), that cooperate to transfer electrons derived from NADH and succinate to molecular oxygen, creating an electrochemical gradient over the inner membrane that drives transmembrane transport and the ATP synthase. Cytochrome c oxidase is the component of the respiratory chain that catalyzes the reduction of oxygen to water. Electrons originating from reduced cytochrome c in the intermembrane space (IMS) are transferred via the dinuclear copper A center (CU(A)) of subunit 2 and heme A of subunit 1 to the active site in subunit 1, a binuclear center (BNC) formed by heme A3 and copper B (CU(B)). The BNC reduces molecular oxygen to 2 water molecules using 4 electrons from cytochrome c in the IMS and 4 protons from the mitochondrial matrix. The sequence is that of Cytochrome c oxidase subunit 2 (MT-CO2) from Cratogeomys castanops (Yellow-faced pocket gopher).